The primary structure comprises 145 residues: Histone H2B (145 aa).

The interval 1–52 (MAPKAAAGKKPAEKKPVEEKKAEEVPAEKKPKAGKKLPKDAGRPDKKKKRAK) is disordered. N6-acetyllysine occurs at positions 9, 35, and 36. A compositionally biased stretch (basic and acidic residues) spans 10–44 (KPAEKKPVEEKKAEEVPAEKKPKAGKKLPKDAGRP). Residue lysine 141 forms a Glycyl lysine isopeptide (Lys-Gly) (interchain with G-Cter in ubiquitin) linkage.

The protein belongs to the histone H2B family. In terms of assembly, the nucleosome is a histone octamer containing two molecules each of H2A, H2B, H3 and H4 assembled in one H3-H4 heterotetramer and two H2A-H2B heterodimers. The octamer wraps approximately 147 bp of DNA. In terms of processing, can be acetylated to form H2BK6ac, H2BK33ac and H2BK34ac. Post-translationally, monoubiquitinated to form H2BK143ub1; may give a specific tag for epigenetic transcriptional activation. As to expression, in anthers, floral buds, pollen, petals and fruits.

It is found in the nucleus. Its subcellular location is the chromosome. Core component of nucleosome. Nucleosomes wrap and compact DNA into chromatin, limiting DNA accessibility to the cellular machineries which require DNA as a template. Histones thereby play a central role in transcription regulation, DNA repair, DNA replication and chromosomal stability. DNA accessibility is regulated via a complex set of post-translational modifications of histones, also called histone code, and nucleosome remodeling. The protein is Histone H2B (HIS2B) of Capsicum annuum (Capsicum pepper).